A 247-amino-acid polypeptide reads, in one-letter code: Sulfate transporter CysZ (247 aa).

5 helical membrane passes run 29–49 (FVVL…FYLF), 66–86 (FLSW…LATF), 141–160 (LLYI…IPAL), 164–186 (VGPV…DYPF), and 212–232 (VLVS…PVAI).

Belongs to the CysZ family.

The protein resides in the cell inner membrane. In terms of biological role, high affinity, high specificity proton-dependent sulfate transporter, which mediates sulfate uptake. Provides the sulfur source for the cysteine synthesis pathway. The sequence is that of Sulfate transporter CysZ from Vibrio parahaemolyticus serotype O3:K6 (strain RIMD 2210633).